We begin with the raw amino-acid sequence, 466 residues long: Ribulose bisphosphate carboxylase large chain (466 aa).

Lys-5 carries the post-translational modification N6,N6,N6-trimethyllysine. 2 residues coordinate substrate: Asn-114 and Thr-164. Residue Lys-166 is the Proton acceptor of the active site. Lys-168 is a binding site for substrate. Lys-192, Asp-194, and Glu-195 together coordinate Mg(2+). Lys-192 bears the N6-carboxylysine mark. His-285 acts as the Proton acceptor in catalysis. 3 residues coordinate substrate: Arg-286, His-318, and Ser-370.

It belongs to the RuBisCO large chain family. Type I subfamily. Heterohexadecamer of 8 large chains and 8 small chains; disulfide-linked. The disulfide link is formed within the large subunit homodimers. Mg(2+) is required as a cofactor. The disulfide bond which can form in the large chain dimeric partners within the hexadecamer appears to be associated with oxidative stress and protein turnover.

Its subcellular location is the plastid. The protein localises to the chloroplast. It carries out the reaction 2 (2R)-3-phosphoglycerate + 2 H(+) = D-ribulose 1,5-bisphosphate + CO2 + H2O. It catalyses the reaction D-ribulose 1,5-bisphosphate + O2 = 2-phosphoglycolate + (2R)-3-phosphoglycerate + 2 H(+). Its function is as follows. RuBisCO catalyzes two reactions: the carboxylation of D-ribulose 1,5-bisphosphate, the primary event in carbon dioxide fixation, as well as the oxidative fragmentation of the pentose substrate in the photorespiration process. Both reactions occur simultaneously and in competition at the same active site. The polypeptide is Ribulose bisphosphate carboxylase large chain (Drosera peltata (Pale sundew)).